Here is a 236-residue protein sequence, read N- to C-terminus: uncharacterized protein (236 aa).

The signal sequence occupies residues 1 to 26 (MTNTWNRLALLIFAVLSLLVAGELQA).

It belongs to the periplasmic pilus chaperone family.

It localises to the periplasm. Its function is as follows. Part of the elfADCG-ycbUVF fimbrial operon, which promotes adhesion of bacteria to different abiotic surfaces. Could be required for the biogenesis of fimbriae. This is an uncharacterized protein from Escherichia coli (strain K12).